Consider the following 357-residue polypeptide: Aminomethyltransferase (357 aa).

The protein belongs to the GcvT family. In terms of assembly, the glycine cleavage system is composed of four proteins: P, T, L and H.

It catalyses the reaction N(6)-[(R)-S(8)-aminomethyldihydrolipoyl]-L-lysyl-[protein] + (6S)-5,6,7,8-tetrahydrofolate = N(6)-[(R)-dihydrolipoyl]-L-lysyl-[protein] + (6R)-5,10-methylene-5,6,7,8-tetrahydrofolate + NH4(+). In terms of biological role, the glycine cleavage system catalyzes the degradation of glycine. The chain is Aminomethyltransferase from Deinococcus deserti (strain DSM 17065 / CIP 109153 / LMG 22923 / VCD115).